We begin with the raw amino-acid sequence, 531 residues long: UDP-glucuronosyltransferase 1A6 (531 aa).

An N-terminal signal peptide occupies residues 1–26 (MACLLPAAQTLPAGFLFLVLWASVLG). Asparagine 293 and asparagine 431 each carry an N-linked (GlcNAc...) asparagine glycan. Residues 489–505 (VIGFLLAIVLTVVFIVF) form a helical membrane-spanning segment.

It belongs to the UDP-glycosyltransferase family. Expressed in liver, kidney and at very low levels in colon.

Its subcellular location is the microsome. The protein localises to the endoplasmic reticulum membrane. The catalysed reaction is glucuronate acceptor + UDP-alpha-D-glucuronate = acceptor beta-D-glucuronoside + UDP + H(+). The enzyme catalyses (5Z,8Z,11Z,14Z)-eicosatetraenoate + UDP-alpha-D-glucuronate = O-[(5Z),(8Z),(11Z),(14Z)-eicosatetraenoyl]-beta-D-glucuronate + UDP. It carries out the reaction 15-hydroxy-(5Z,8Z,11Z,13E)-eicosatetraenoate + UDP-alpha-D-glucuronate = 15-O-(beta-D-glucuronosyl)-(5Z,8Z,11Z,14Z)-eicosatetraenoate + UDP + H(+). It catalyses the reaction (E)-ferulate + UDP-alpha-D-glucuronate = (E)-4-O-(beta-D-glucuronosyl)-ferulate + UDP + H(+). The catalysed reaction is (E)-ferulate + UDP-alpha-D-glucuronate = (E)-ferulic acid beta-D-glucuronate ester + UDP. In terms of biological role, UDP-glucuronosyltransferase (UGT) that catalyzes phase II biotransformation reactions in which lipophilic substrates are conjugated with glucuronic acid to facilitate their inactivation and excretion from the body. Essential for the elimination and detoxification of drugs, xenobiotics and endogenous compounds. Involved in the glucuronidation of arachidonic acid (AA) and AA-derived eicosanoids including 15-HETE and 20-HETE. Conjugates small planar phenolic molecules such as 4-nitrophenol, 1-naphthol, and 4-methylumbelliferone. The bulky phenol 4-hydroxybiphenyl, androgens and estrogens are not substrates. 2-hydroxybiphenyl is an excellent substrate. Involved in the glucuronidation of the phytochemical ferulic acid at the phenolic or the carboxylic acid group. This Mus musculus (Mouse) protein is UDP-glucuronosyltransferase 1A6.